A 263-amino-acid polypeptide reads, in one-letter code: Indolethylamine N-methyltransferase (263 aa).

Lys-13 bears the N6-succinyllysine mark. Residues Tyr-20, Tyr-25, 63 to 64 (GS), Tyr-69, Asp-85, and Asn-90 each bind S-adenosyl-L-methionine. Lys-96 is modified (N6-succinyllysine). S-adenosyl-L-methionine-binding positions include 142-143 (DA) and Leu-163.

This sequence belongs to the class I-like SAM-binding methyltransferase superfamily. NNMT/PNMT/TEMT family. Monomer. In terms of tissue distribution, highly expressed in lung, also detected in liver and at very low levels in brain.

It is found in the cytoplasm. It catalyses the reaction a tertiary amine + S-adenosyl-L-methionine = a methylated tertiary amine + S-adenosyl-L-homocysteine + H(+). The catalysed reaction is a secondary amine + S-adenosyl-L-methionine = a methylated secondary amine + S-adenosyl-L-homocysteine + H(+). The enzyme catalyses a primary amine + S-adenosyl-L-methionine = a methylated primary amine + S-adenosyl-L-homocysteine + H(+). It carries out the reaction dimethyl sulfide + S-adenosyl-L-methionine = trimethylsulfonium + S-adenosyl-L-homocysteine. In terms of biological role, catalyzes the N-methylation of tryptamine and structurally related compounds. Functions as a thioether S-methyltransferase and is active with a variety of thioethers and the corresponding selenium and tellurium compounds, including 3-methylthiopropionaldehyde, dimethyl selenide, dimethyl telluride, 2-methylthioethylamine, 2-methylthioethanol, methyl-n-propyl sulfide and diethyl sulfide. Plays an important role in the detoxification of selenium compounds. The protein is Indolethylamine N-methyltransferase (INMT) of Oryctolagus cuniculus (Rabbit).